The following is a 159-amino-acid chain: Ribosomal RNA large subunit methyltransferase H (159 aa).

S-adenosyl-L-methionine contacts are provided by residues Leu-76, Gly-107, and 126 to 131; that span reads ISSLTL.

This sequence belongs to the RNA methyltransferase RlmH family. Homodimer.

The protein localises to the cytoplasm. The catalysed reaction is pseudouridine(1915) in 23S rRNA + S-adenosyl-L-methionine = N(3)-methylpseudouridine(1915) in 23S rRNA + S-adenosyl-L-homocysteine + H(+). In terms of biological role, specifically methylates the pseudouridine at position 1915 (m3Psi1915) in 23S rRNA. The protein is Ribosomal RNA large subunit methyltransferase H of Cupriavidus metallidurans (strain ATCC 43123 / DSM 2839 / NBRC 102507 / CH34) (Ralstonia metallidurans).